The sequence spans 209 residues: MEPFAAYPLKCSGPKAKIFAVLLSMVLCTVMLFLLQLKFLKPRTNSFYSFEVKDAKGRTVSLEKFKGKASLVVNVASDCRFTDKSYQTLRELHKEFGPYHFNVLAFPCNQFGESEPKSSKEVESFARQNYGVTFPIFHKIKILGPEAEPAFRFIVDSSKKEPRWNFWKYLVNPEGQVVKFWRPEEPLEAIRPHVSQMIGQIILKKKEDL.

Met1 carries the post-translational modification N-acetylmethionine. The helical transmembrane segment at 18–40 (IFAVLLSMVLCTVMLFLLQLKFL) threads the bilayer. Cys79 is an active-site residue.

The protein belongs to the glutathione peroxidase family.

The protein localises to the membrane. The catalysed reaction is 2 glutathione + H2O2 = glutathione disulfide + 2 H2O. This is Probable glutathione peroxidase 8 (Gpx8) from Mus musculus (Mouse).